A 95-amino-acid chain; its full sequence is Large ribosomal subunit protein eL37x (95 aa).

Zn(2+)-binding residues include Cys19, Cys22, Cys34, and Cys37. A C4-type zinc finger spans residues 19–37 (CVRCGRRSFHIQKSRCSAC). Residues 73–95 (RFKTGFREGTEAKPRSKASASSA) are disordered. Residues 77 to 86 (GFREGTEAKP) show a composition bias toward basic and acidic residues.

The protein belongs to the eukaryotic ribosomal protein eL37 family. The cofactor is Zn(2+).

Its function is as follows. Binds to the 23S rRNA. This is Large ribosomal subunit protein eL37x (RPL37C) from Arabidopsis thaliana (Mouse-ear cress).